The sequence spans 71 residues: DNA-directed RNA polymerase subunit epsilon (71 aa).

Belongs to the RNA polymerase subunit epsilon family. RNAP is composed of a core of 2 alpha, a beta and a beta' subunit. The core is associated with a delta subunit, and at least one of epsilon or omega. When a sigma factor is associated with the core the holoenzyme is formed, which can initiate transcription.

The catalysed reaction is RNA(n) + a ribonucleoside 5'-triphosphate = RNA(n+1) + diphosphate. In terms of biological role, a non-essential component of RNA polymerase (RNAP). The polypeptide is DNA-directed RNA polymerase subunit epsilon (Staphylococcus saprophyticus subsp. saprophyticus (strain ATCC 15305 / DSM 20229 / NCIMB 8711 / NCTC 7292 / S-41)).